A 333-amino-acid chain; its full sequence is Ferrochelatase (333 aa).

2 residues coordinate Fe cation: histidine 202 and glutamate 284.

This sequence belongs to the ferrochelatase family.

Its subcellular location is the cytoplasm. It catalyses the reaction heme b + 2 H(+) = protoporphyrin IX + Fe(2+). It participates in porphyrin-containing compound metabolism; protoheme biosynthesis; protoheme from protoporphyrin-IX: step 1/1. Catalyzes the ferrous insertion into protoporphyrin IX. This Francisella tularensis subsp. novicida (strain U112) protein is Ferrochelatase.